The primary structure comprises 83 residues: Mu-theraphotoxin-Hhn2f (83 aa).

An N-terminal signal peptide occupies residues 1–21; sequence MKASMFLALAGLVLLFVVGYA. Positions 22-48 are excised as a propeptide; that stretch reads SESEEKEFPIELLSKIFAVDVFKGEER. 3 disulfide bridges follow: Cys-50-Cys-65, Cys-57-Cys-70, and Cys-64-Cys-77. Leu-81 is subject to Leucine amide.

It belongs to the neurotoxin 10 (Hwtx-1) family. 15 (Hntx-3) subfamily. In terms of assembly, monomer. In terms of tissue distribution, expressed by the venom gland.

The protein resides in the secreted. In terms of biological role, lethal neurotoxin. Selectively blocks tetrodotoxin-sensitive voltage-gated sodium channels (Nav). Does not affect tetrodotoxin-resistant voltage-gated sodium channels or calcium channels. This Cyriopagopus hainanus (Chinese bird spider) protein is Mu-theraphotoxin-Hhn2f.